The chain runs to 595 residues: Metacaspase-1 (595 aa).

Residues H411 and C466 contribute to the active site.

It belongs to the peptidase C14B family. As to quaternary structure, monomer.

Activated by Ca(2+). Cysteine protease that cleaves specifically after arginine or lysine residues. In Plasmodium berghei (strain Anka), this protein is Metacaspase-1.